Consider the following 247-residue polypeptide: Carboxy-S-adenosyl-L-methionine synthase (247 aa).

Residues Tyr-40, 65-67 (GAS), 90-91 (DN), 122-123 (DI), Asn-137, and Arg-204 each bind S-adenosyl-L-methionine.

Belongs to the class I-like SAM-binding methyltransferase superfamily. Cx-SAM synthase family. As to quaternary structure, homodimer.

The enzyme catalyses prephenate + S-adenosyl-L-methionine = carboxy-S-adenosyl-L-methionine + 3-phenylpyruvate + H2O. Functionally, catalyzes the conversion of S-adenosyl-L-methionine (SAM) to carboxy-S-adenosyl-L-methionine (Cx-SAM). In Pseudomonas putida (strain W619), this protein is Carboxy-S-adenosyl-L-methionine synthase.